The sequence spans 1143 residues: Disease resistance protein Pikm1-TS (1143 aa).

A structured coiled coil (CC) domain region spans residues Met1–Gln190. In terms of domain architecture, HMA spans Met189–Val258. The tract at residues Lys191–Asp264 is HMA-like domain. The NB-ARC domain occupies His282–Glu570. 10 LRR repeats span residues Phe681 to Gln706, Ser708 to Leu731, Lys732 to Leu754, His756 to Leu777, Gln778 to Leu800, Asn802 to Leu823, Asn824 to Gln848, Met945 to Thr968, Asp979 to Phe1002, and Ala1004 to Cys1027.

The protein belongs to the disease resistance NB-LRR family. In terms of assembly, interacts with AVR-Pik through its N-terminal part containing the HMA-like domain. As to expression, constitutively expressed.

Disease resistance (R) protein that specifically recognizes the AVR-Pik effector avirulence protein from M.oryzae. Resistance proteins guard the plant against pathogens that contain an appropriate avirulence protein via an indirect interaction with this avirulence protein. That triggers a defense system including the hypersensitive response, which restricts the pathogen growth. Contribution of Pikm-2 is required to recognize the effector avirulence protein AVR-Pik. The sequence is that of Disease resistance protein Pikm1-TS from Oryza sativa subsp. japonica (Rice).